The sequence spans 372 residues: tRNA pseudouridine synthase D (372 aa).

The active-site Nucleophile is Asp85. In terms of domain architecture, TRUD spans 160 to 330 (GFTNYFGYQR…MQGSRRFMWG (171 aa)).

It belongs to the pseudouridine synthase TruD family.

The enzyme catalyses uridine(13) in tRNA = pseudouridine(13) in tRNA. Its function is as follows. Responsible for synthesis of pseudouridine from uracil-13 in transfer RNAs. This is tRNA pseudouridine synthase D from Campylobacter jejuni subsp. jejuni serotype O:23/36 (strain 81-176).